The primary structure comprises 382 residues: Lipid-A-disaccharide synthase (382 aa).

The protein belongs to the LpxB family.

The enzyme catalyses a lipid X + a UDP-2-N,3-O-bis[(3R)-3-hydroxyacyl]-alpha-D-glucosamine = a lipid A disaccharide + UDP + H(+). It functions in the pathway bacterial outer membrane biogenesis; LPS lipid A biosynthesis. Functionally, condensation of UDP-2,3-diacylglucosamine and 2,3-diacylglucosamine-1-phosphate to form lipid A disaccharide, a precursor of lipid A, a phosphorylated glycolipid that anchors the lipopolysaccharide to the outer membrane of the cell. The sequence is that of Lipid-A-disaccharide synthase from Alteromonas mediterranea (strain DSM 17117 / CIP 110805 / LMG 28347 / Deep ecotype).